The sequence spans 327 residues: Arabinose 5-phosphate isomerase KpsF (327 aa).

The SIS domain occupies 48–191; the sequence is VLNLIMNCKG…AIAMIHQRKF (144 aa). Residue 63 to 68 participates in ATP binding; sequence GMGKSG. Residues 82–83, H89, H95, 121–130, and 155–157 contribute to the substrate site; these read GT, KLVPSLKNFG, and HMA. H89 serves as a coordination point for Zn(2+). CBS domains are found at residues 217–273 and 282–327; these read MQHD…EGSL and MTRE…RIFD.

Homotetramer.

It carries out the reaction D-arabinose 5-phosphate = D-ribulose 5-phosphate. Its activity is regulated as follows. Inhibited by 10 uM zinc, cadmium or mercury ions. Involved in the biosynthesis of K-antigen capsules. Catalyzes the reversible aldol-ketol isomerization between D-ribulose 5-phosphate (Ru5P) and D-arabinose 5-phosphate (A5P). This chain is Arabinose 5-phosphate isomerase KpsF, found in Escherichia coli O6:H1 (strain CFT073 / ATCC 700928 / UPEC).